Here is a 268-residue protein sequence, read N- to C-terminus: Basic endochitinase CHB4 (268 aa).

An N-terminal signal peptide occupies residues 1–24; sequence MALTKLSLVLFLCFLGLYSETVKS. A Chitin-binding type-1 domain is found at 25-59; the sequence is QNCGCAPNLCCSQFGYCGSTDAYCGTGCRSGPCRS. 7 disulfide bridges follow: cysteine 27/cysteine 35, cysteine 29/cysteine 41, cysteine 34/cysteine 48, cysteine 52/cysteine 57, cysteine 92/cysteine 137, cysteine 150/cysteine 159, and cysteine 236/cysteine 268. Residues 71–268 form a catalytic region; the sequence is SVGSIVTQAF…GVDPGPNLSC (198 aa). Residue glutamate 132 is the Proton donor of the active site. N-linked (GlcNAc...) asparagine glycosylation is present at asparagine 265.

This sequence belongs to the glycosyl hydrolase 19 family. Chitinase class I subfamily.

Its subcellular location is the secreted. The protein resides in the extracellular space. It catalyses the reaction Random endo-hydrolysis of N-acetyl-beta-D-glucosaminide (1-&gt;4)-beta-linkages in chitin and chitodextrins.. Its function is as follows. Defense against chitin-containing fungal pathogens. This chain is Basic endochitinase CHB4, found in Brassica napus (Rape).